A 589-amino-acid polypeptide reads, in one-letter code: Capsid scaffolding protein (589 aa).

Active-site charge relay system residues include His-47, Ser-118, and His-142. Residues 264 to 273 (EKERPKEPEQ) are compositionally biased toward basic and acidic residues. Residues 264-283 (EKERPKEPEQSHVPTESMSH) form a disordered region. The interaction with pAP stretch occupies residues 307-326 (HDGVYLPKDAFFSLIGASRP). 2 disordered regions span residues 421–478 (RSRS…GDRY) and 514–552 (ASPT…AERG). 2 consecutive short sequence motifs (nuclear localization signal) follow at residues 428–433 (KRRRER) and 453–459 (KARKRLK). Residues 453-462 (KARKRLKAHH) are compositionally biased toward basic residues. Low complexity predominate over residues 514-543 (ASPTTTTSHQAEASEPQASTAAAAPSTASS). Residues 569–589 (PPKDMVDLNRRLFVAALNKME) form an interaction with major capsid protein region.

Belongs to the herpesviridae capsid scaffolding protein family. Homomultimer. Interacts with major capsid protein. As to quaternary structure, exists in a monomer-dimer equilibrium with the dimer being the active species. Capsid scaffolding protein is cleaved by assemblin after formation of the spherical procapsid. As a result, the capsid obtains its mature, icosahedral shape. Cleavages occur at two or more sites: release (R-site) and maturation (M-site).

It localises to the host cytoplasm. It is found in the host nucleus. The enzyme catalyses Cleaves -Ala-|-Ser- and -Ala-|-Ala- bonds in the scaffold protein.. In terms of biological role, acts as a scaffold protein by binding major capsid protein in the cytoplasm, inducing the nuclear localization of both proteins. Multimerizes in the nucleus such as major capsid protein forms the icosahedral T=16 capsid. Autocatalytic cleavage releases the assembly protein, and subsequently abolishes interaction with major capsid protein. Cleavages products are evicted from the capsid before or during DNA packaging. Protease that plays an essential role in virion assembly within the nucleus. Catalyzes the cleavage of the assembly protein after formation of the spherical procapsid. By that cleavage, the capsid matures and gains its icosahedral shape. The cleavage sites seem to include -Ala-Ser-, -Ala-Ala-, as well as Ala-Thr bonds. Assemblin and cleavages products are evicted from the capsid before or during DNA packaging. Functionally, plays a major role in capsid assembly. Acts as a scaffold protein by binding major capsid protein. Multimerizes in the nucleus such as major capsid protein forms the icosahedral T=16 capsid. Cleaved by assemblin after capsid completion. The cleavages products are evicted from the capsid before or during DNA packaging. This Simian cytomegalovirus (strain Colburn) protein is Capsid scaffolding protein (UL80).